The primary structure comprises 362 residues: Endopolygalacturonase II (362 aa).

The first 20 residues, 1-20 (MHSFASLLRYGLAAGATLAS), serve as a signal peptide directing secretion. Residues 21–27 (ASPIEAR) constitute a propeptide that is removed on maturation. Cys30 and Cys45 are oxidised to a cystine. Residues 156–186 (SDDITLTDITINNADGDSLGGHNTDAFDVGN) form a PbH1 1 repeat. The active-site Proton donor is Asp201. Cys203 and Cys219 form a disulfide bridge. PbH1 repeat units follow at residues 209–229 (GENI…SIGS), 238–259 (VKNV…RIKT), 267–289 (VSEI…VIQQ), and 301–322 (TNGV…DSKA). His223 is a catalytic residue. An N-linked (GlcNAc...) asparagine glycan is attached at Asn240. 2 disulfides stabilise this stretch: Cys329–Cys334 and Cys353–Cys362.

It belongs to the glycosyl hydrolase 28 family.

The protein resides in the secreted. It carries out the reaction (1,4-alpha-D-galacturonosyl)n+m + H2O = (1,4-alpha-D-galacturonosyl)n + (1,4-alpha-D-galacturonosyl)m.. In terms of biological role, involved in maceration and soft-rotting of plant tissue. Hydrolyzes the 1,4-alpha glycosidic bonds of de-esterified pectate in the smooth region of the plant cell wall. The polypeptide is Endopolygalacturonase II (pgaII) (Aspergillus awamori (Black koji mold)).